A 1061-amino-acid chain; its full sequence is Carbamoyl phosphate synthase large chain (1061 aa).

The carboxyphosphate synthetic domain stretch occupies residues 1 to 401 (MPKRTDVHKI…ALQKAVRSLE (401 aa)). ATP is bound by residues Arg129, Arg169, Gly175, Gly176, Lys208, Ile210, Glu215, Gly241, Ile242, His243, Gln284, and Glu298. The ATP-grasp 1 domain occupies 133–327 (KDLMQELNEP…IAKLAAKIAV (195 aa)). 3 residues coordinate Mg(2+): Gln284, Glu298, and Asn300. Mn(2+)-binding residues include Gln284, Glu298, and Asn300. Residues 402–546 (IDEKDLISAK…YSSYDLENES (145 aa)) form an oligomerization domain region. The interval 547–929 (KKSDKKSVLV…ALYKAFTGAK (383 aa)) is carbamoyl phosphate synthetic domain. In terms of domain architecture, ATP-grasp 2 spans 671–861 (DQTIKNLGLK…MAQVATRVIL (191 aa)). ATP-binding residues include Arg707, Ala746, Leu748, Glu752, Gly777, Val778, His779, Ser780, Gln820, and Glu832. The Mg(2+) site is built by Gln820, Glu832, and Asn834. 3 residues coordinate Mn(2+): Gln820, Glu832, and Asn834. Residues 930–1061 (MELPDNGNVL…ENRSFATNSL (132 aa)) enclose the MGS-like domain. The interval 930–1061 (MELPDNGNVL…ENRSFATNSL (132 aa)) is allosteric domain.

It belongs to the CarB family. In terms of assembly, composed of two chains; the small (or glutamine) chain promotes the hydrolysis of glutamine to ammonia, which is used by the large (or ammonia) chain to synthesize carbamoyl phosphate. Tetramer of heterodimers (alpha,beta)4. It depends on Mg(2+) as a cofactor. The cofactor is Mn(2+).

The enzyme catalyses hydrogencarbonate + L-glutamine + 2 ATP + H2O = carbamoyl phosphate + L-glutamate + 2 ADP + phosphate + 2 H(+). It carries out the reaction hydrogencarbonate + NH4(+) + 2 ATP = carbamoyl phosphate + 2 ADP + phosphate + 2 H(+). Its pathway is amino-acid biosynthesis; L-arginine biosynthesis; carbamoyl phosphate from bicarbonate: step 1/1. It functions in the pathway pyrimidine metabolism; UMP biosynthesis via de novo pathway; (S)-dihydroorotate from bicarbonate: step 1/3. Its function is as follows. Large subunit of the glutamine-dependent carbamoyl phosphate synthetase (CPSase). CPSase catalyzes the formation of carbamoyl phosphate from the ammonia moiety of glutamine, carbonate, and phosphate donated by ATP, constituting the first step of 2 biosynthetic pathways, one leading to arginine and/or urea and the other to pyrimidine nucleotides. The large subunit (synthetase) binds the substrates ammonia (free or transferred from glutamine from the small subunit), hydrogencarbonate and ATP and carries out an ATP-coupled ligase reaction, activating hydrogencarbonate by forming carboxy phosphate which reacts with ammonia to form carbamoyl phosphate. This chain is Carbamoyl phosphate synthase large chain, found in Ligilactobacillus salivarius (strain UCC118) (Lactobacillus salivarius).